The chain runs to 988 residues: Ephrin type-B receptor 3 (988 aa).

Residues 1 to 24 (GVSSRARRPPGSSRSSRRGVTSEL) are disordered. The Extracellular segment spans residues 1–534 (GVSSRARRPP…TSKTFQELPL (534 aa)). Residues 11–189 (GSSRSSRRGV…FYKKCSNTIA (179 aa)) enclose the Eph LBD domain. The cysteines at positions 53 and 171 are disulfide-linked. Fibronectin type-III domains follow at residues 311-424 (VPSA…TNQA) and 425-522 (APSA…TAED). N-linked (GlcNAc...) asparagine glycans are attached at residues N323 and N418. The chain crosses the membrane as a helical span at residues 535–555 (IVGSATAGLLFVIVVVIIAIV). The Cytoplasmic portion of the chain corresponds to 556–988 (CFRKGMVTEQ…QMNQTLPVQV (433 aa)). Y604 is subject to Phosphotyrosine; by autocatalysis. Residues 623–886 (VKIEEVIGAG…QIVNTLDKLI (264 aa)) form the Protein kinase domain. ATP contacts are provided by residues 629-637 (IGAGEFGEV) and K655. D748 serves as the catalytic Proton acceptor. Residues 915–979 (TTFTTVGDWL…LSSIQDMRLQ (65 aa)) enclose the SAM domain. The PDZ-binding signature appears at 986–988 (VQV).

The protein belongs to the protein kinase superfamily. Tyr protein kinase family. Ephrin receptor subfamily. As to quaternary structure, heterotetramer upon binding of the ligand. The heterotetramer is composed of an ephrin dimer and a receptor dimer. Oligomerization is probably required to induce biological responses. In terms of processing, phosphorylated. Autophosphorylates upon ligand-binding. Autophosphorylation on Tyr-604 is required for interaction with SH2 domain-containing proteins. In terms of tissue distribution, present in 10-day embryonic brain and body tissues. Prominent expression in kidney. Lower expression in lung, and barely detectable in brain, liver, heart, skeletal muscle and thymus.

It is found in the cell membrane. The protein localises to the cell projection. It localises to the dendrite. It carries out the reaction L-tyrosyl-[protein] + ATP = O-phospho-L-tyrosyl-[protein] + ADP + H(+). In terms of biological role, receptor tyrosine kinase which binds promiscuously transmembrane ephrin-B family ligands residing on adjacent cells, leading to contact-dependent bidirectional signaling into neighboring cells. The signaling pathway downstream of the receptor is referred to as forward signaling while the signaling pathway downstream of the ephrin ligand is referred to as reverse signaling. Generally has an overlapping and redundant function with EPHB2. Like EPHB2, functions in axon guidance during development. In addition to its role in axon guidance also plays an important redundant role with other ephrin-B receptors in development and maturation of dendritic spines and the formation of excitatory synapses. May control other aspects of development through regulation of cell migration and positioning. This Gallus gallus (Chicken) protein is Ephrin type-B receptor 3 (EPHB3).